Here is a 448-residue protein sequence, read N- to C-terminus: Methylenetetrahydrofolate--tRNA-(uracil-5-)-methyltransferase TrmFO (448 aa).

Gly-13–Gly-18 serves as a coordination point for FAD.

Belongs to the MnmG family. TrmFO subfamily. Requires FAD as cofactor.

It localises to the cytoplasm. It catalyses the reaction uridine(54) in tRNA + (6R)-5,10-methylene-5,6,7,8-tetrahydrofolate + NADH + H(+) = 5-methyluridine(54) in tRNA + (6S)-5,6,7,8-tetrahydrofolate + NAD(+). It carries out the reaction uridine(54) in tRNA + (6R)-5,10-methylene-5,6,7,8-tetrahydrofolate + NADPH + H(+) = 5-methyluridine(54) in tRNA + (6S)-5,6,7,8-tetrahydrofolate + NADP(+). In terms of biological role, catalyzes the folate-dependent formation of 5-methyl-uridine at position 54 (M-5-U54) in all tRNAs. In Streptococcus pyogenes serotype M4 (strain MGAS10750), this protein is Methylenetetrahydrofolate--tRNA-(uracil-5-)-methyltransferase TrmFO.